Reading from the N-terminus, the 800-residue chain is Nucleolar RNA helicase 2-B (800 aa).

Residues 1-14 (MPGKVYTDEMEGKS) show a composition bias toward basic and acidic residues. A disordered region spans residues 1–200 (MPGKVYTDEM…TDTSEITAAN (200 aa)). Positions 114–124 (ETNISLSSQGG) are enriched in polar residues. A Q motif motif is present at residues 221-249 (GDFSKFPISKDTIKNLQAKGVTYLFPIQS). In terms of domain architecture, Helicase ATP-binding spans 252–431 (FHTVYSGKDV…KKYMRKQYEK (180 aa)). 265–272 (ARTGTGKT) contacts ATP. The short motif at 374-377 (DEVD) is the DEAD box element. A Helicase C-terminal domain is found at 464-620 (DIVQVYSGSH…SSADAIKSLD (157 aa)). The interval 750–800 (IQESERSFDGPRNRSFGGRGRRPFDRRNNSRNSSGGGGGRRGRSGGFRRGR) is disordered. Residues 752–761 (ESERSFDGPR) show a composition bias toward basic and acidic residues. Basic residues predominate over residues 789 to 800 (RRGRSGGFRRGR).

The protein belongs to the DEAD box helicase family. DDX21/DDX50 subfamily. Widely expressed. Expressed at higher level in stomach. Expressed at lower level compared to ddx21-a.

Its subcellular location is the nucleus. It localises to the nucleolus. The protein resides in the nucleoplasm. The protein localises to the cytoplasm. It is found in the cytosol. Its subcellular location is the mitochondrion. The catalysed reaction is ATP + H2O = ADP + phosphate + H(+). RNA helicase that acts as a sensor of the transcriptional status of both RNA polymerase (Pol) I and II: promotes ribosomal RNA (rRNA) processing and transcription from polymerase II (Pol II). Binds various RNAs, such as rRNAs, snoRNAs, 7SK and, at lower extent, mRNAs. In the nucleolus, localizes to rDNA locus, where it directly binds rRNAs and snoRNAs, and promotes rRNA transcription, processing and modification. Required for rRNA 2'-O-methylation, possibly by promoting the recruitment of late-acting snoRNAs SNORD56 and SNORD58 with pre-ribosomal complexes. In the nucleoplasm, binds 7SK RNA and is recruited to the promoters of Pol II-transcribed genes: acts by facilitating the release of P-TEFb from inhibitory 7SK snRNP in a manner that is dependent on its helicase activity, thereby promoting transcription of its target genes. Required to prevent R-loop-associated DNA damage and transcription-associated genomic instability. The protein is Nucleolar RNA helicase 2-B (ddx21-b) of Xenopus laevis (African clawed frog).